Consider the following 611-residue polypeptide: TANK-binding kinase 1-binding protein 1 (611 aa).

The interval 1 to 280 is homodimerization; the sequence is MESMFEDDIS…QDLASNQSEC (280 aa). Positions 48–162 form a coiled coil; the sequence is YGDIKERLGG…ALVETHLRQI (115 aa). Serine 184 bears the Phosphoserine mark. Residues 218–277 adopt a coiled-coil conformation; that stretch reads TSVSVSELERRRLEEALEAAQGEARGAQLREEQLQAECERLQGELKQLQETRAQDLASNQ. The segment at 281 to 330 is interaction with TBK1 and IKBKE; sequence DMAWVKRVGDDQVNLALAYTELTEELGRLRELSSLQGRILRTLLQEQARN. A disordered region spans residues 328 to 437; sequence ARNAGQRHSP…PPPPPGERTL (110 aa). The segment covering 346 to 361 has biased composition (pro residues); it reads PACPSPSPPARPPPCA. Low complexity predominate over residues 362-372; the sequence is PCQSPAAQRRS. A phosphoserine mark is found at serine 365, serine 372, serine 379, serine 385, serine 400, and serine 415. Residues 389 to 406 are compositionally biased toward pro residues; sequence PSCPSPVPQRRSPVPPSC. The segment covering 416–433 has biased composition (pro residues); that stretch reads PVPPSCPAPQPRPPPPPG. Phosphoserine occurs at positions 500 and 530. The segment at 579–605 adopts a UBZ1-type zinc-finger fold; it reads IRSCPLCQLGFPVGYPDDALIKHIDSH. Cysteine 582, cysteine 585, histidine 601, and histidine 605 together coordinate Zn(2+).

In terms of assembly, homodimer. May form a heterodimer with NAP1. Interacts with TKB1 and IKBKE. Weakly interacts with DDX3X.

Functionally, adapter protein which constitutively binds TBK1 and IKBKE playing a role in antiviral innate immunity. Essential for the efficient induction of IRF-dependent transcription following infection with Sendai virus. This is TANK-binding kinase 1-binding protein 1 from Mus musculus (Mouse).